Reading from the N-terminus, the 758-residue chain is Vitamin K-dependent gamma-carboxylase (758 aa).

A disordered region spans residues 1–21; the sequence is MAVSARSARTSPGSDKVQKDK. Ala2 bears the N-acetylalanine mark. At 2-60 the chain is on the cytoplasmic side; the sequence is AVSARSARTSPGSDKVQKDKAELISGPRQDSLMGKLLGFEWTDLSSWRRLVTLLNRPTD. A helical transmembrane segment spans residues 61–81; sequence PASLAVFRFLFGFLMVLDIPQ. The Lumenal segment spans residues 82–113; sequence ERGLSSLDRKYLDGLDVCRFPLLDALRPLPLD. Cys99 and Cys450 are oxidised to a cystine. The helical transmembrane segment at 114-134 threads the bilayer; it reads WMYLVYTIMFLGALGMMLGLC. Over 135 to 136 the chain is Cytoplasmic; sequence YR. A helical transmembrane segment spans residues 137–157; it reads ISCVLFLLPYWYVFLLDKTSW. The Lumenal portion of the chain corresponds to 158-292; it reads NNHSYLYGLL…VSYFHCMNSQ (135 aa). A helical transmembrane segment spans residues 293–313; that stretch reads LFSIGMFSYVMLASSPLFCSP. The Cytoplasmic segment spans residues 314–361; that stretch reads EWPRKLVSYCPQRLQELLPLKAAPQPSVSCVYKRSRGKSGQKPGLRHQ. The chain crosses the membrane as a helical span at residues 362 to 382; that stretch reads LGAAFTLLYLLEQLFLPYSHF. The Lumenal segment spans residues 383–758; that stretch reads LTQGYNNWTN…SNPDPVHSEF (376 aa). Residues 732–758 form a disordered region; the sequence is GELSPSNMDSSHSNPPESNPDPVHSEF. A compositionally biased stretch (polar residues) spans 735–747; sequence SPSNMDSSHSNPP.

Belongs to the vitamin K-dependent gamma-carboxylase family. As to quaternary structure, monomer. May interact with CALU.

Its subcellular location is the endoplasmic reticulum membrane. It carries out the reaction 4-carboxy-L-glutamyl-[protein] + 2,3-epoxyphylloquinone + H2O + H(+) = phylloquinol + L-glutamyl-[protein] + CO2 + O2. Functionally, mediates the vitamin K-dependent carboxylation of glutamate residues to calcium-binding gamma-carboxyglutamate (Gla) residues with the concomitant conversion of the reduced hydroquinone form of vitamin K to vitamin K epoxide. Catalyzes gamma-carboxylation of various proteins, such as blood coagulation factors (F2, F7, F9 and F10), osteocalcin (BGLAP) or matrix Gla protein (MGP). This chain is Vitamin K-dependent gamma-carboxylase (GGCX), found in Pongo abelii (Sumatran orangutan).